Here is a 60-residue protein sequence, read N- to C-terminus: UPF0434 protein YcaR (60 aa).

This sequence belongs to the UPF0434 family.

The polypeptide is UPF0434 protein YcaR (Salmonella agona (strain SL483)).